Reading from the N-terminus, the 423-residue chain is Torsin-4A (423 aa).

A disordered region spans residues 47 to 68 (PGGGPDVGTGAPRPGCSPRAPR). 2 positions are modified to phosphoserine: serine 63 and serine 81. Threonine 89 carries the post-translational modification Phosphothreonine. Serine 106 bears the Phosphoserine mark. A helical membrane pass occupies residues 122–138 (CLLLLVAIVGFQVLNAI). 194–201 (GPSGVGKS) provides a ligand contact to ATP.

It belongs to the ClpA/ClpB family. Torsin subfamily.

It is found in the membrane. The chain is Torsin-4A (TOR4A) from Homo sapiens (Human).